Here is a 598-residue protein sequence, read N- to C-terminus: DNA primase (598 aa).

A CHC2-type zinc finger spans residues 38-62 (CPFHDEKTPSFTVSEDKQICHCFGC). The Toprim domain maps to 260 to 341 (DEIILLEGFM…NVYVVQLPSG (82 aa)). Residues Glu-266, Asp-310, and Asp-312 each coordinate Mg(2+).

This sequence belongs to the DnaG primase family. In terms of assembly, monomer. Interacts with DnaB. Zn(2+) is required as a cofactor. It depends on Mg(2+) as a cofactor.

It carries out the reaction ssDNA + n NTP = ssDNA/pppN(pN)n-1 hybrid + (n-1) diphosphate.. RNA polymerase that catalyzes the synthesis of short RNA molecules used as primers for DNA polymerase during DNA replication. This is DNA primase from Staphylococcus epidermidis (strain ATCC 12228 / FDA PCI 1200).